The sequence spans 569 residues: Amyloid-beta A4 precursor protein-binding family A member 3 (569 aa).

N-acetylmethionine is present on M1. 2 disordered regions span residues 1–53 and 124–168; these read MEFL…MELD and AQSV…SSPE. A compositionally biased stretch (basic and acidic residues) spans 19–32; sequence EEPKGPEVPSEDHP. Over residues 132 to 141 the composition is skewed to low complexity; it reads AQAAPRLLQP. S166 and S367 each carry phosphoserine. A PID domain is found at 212-376; sequence DGVLFGAKYL…SASASHPHNG (165 aa). PDZ domains follow at residues 389–475 and 480–554; these read EVCI…IIHC and TAVI…TMPA.

In terms of assembly, binds to the cytoplasmic domain of amyloid protein (APP). Interacts with HIF1AN (via N-terminus). Interacts with NECAB3; seems to mediate the interaction between NECAB3 and HIF1AN. As to expression, ubiquitous.

The protein localises to the cytoplasm. The protein resides in the perinuclear region. Functionally, may modulate processing of the amyloid-beta precursor protein (APP) and hence formation of APP-beta. May enhance the activity of HIF1A in macrophages by inhibiting the activity of HIF1AN. The protein is Amyloid-beta A4 precursor protein-binding family A member 3 (Apba3) of Rattus norvegicus (Rat).